Here is a 234-residue protein sequence, read N- to C-terminus: Purine nucleoside phosphorylase DeoD-type (234 aa).

An a purine D-ribonucleoside-binding site is contributed by His5. Residues Gly21, Arg25, Arg44, and 88–91 each bind phosphate; that span reads RIGT. Residues 180–182 and 204–205 each bind a purine D-ribonucleoside; these read DME and SD. The active-site Proton donor is the Asp205.

This sequence belongs to the PNP/UDP phosphorylase family. In terms of assembly, homohexamer; trimer of homodimers.

The enzyme catalyses a purine D-ribonucleoside + phosphate = a purine nucleobase + alpha-D-ribose 1-phosphate. It carries out the reaction a purine 2'-deoxy-D-ribonucleoside + phosphate = a purine nucleobase + 2-deoxy-alpha-D-ribose 1-phosphate. Functionally, catalyzes the reversible phosphorolytic breakdown of the N-glycosidic bond in the beta-(deoxy)ribonucleoside molecules, with the formation of the corresponding free purine bases and pentose-1-phosphate. In Buchnera aphidicola subsp. Acyrthosiphon pisum (strain 5A), this protein is Purine nucleoside phosphorylase DeoD-type.